The primary structure comprises 244 residues: Orotidine 5'-phosphate decarboxylase (244 aa).

Substrate-binding positions include Asp10, Lys32, 59–68 (DLKLHDIPNT), Thr122, Arg184, Gln193, Gly213, and Arg214. Lys61 functions as the Proton donor in the catalytic mechanism.

It belongs to the OMP decarboxylase family. Type 1 subfamily. In terms of assembly, homodimer.

The catalysed reaction is orotidine 5'-phosphate + H(+) = UMP + CO2. The protein operates within pyrimidine metabolism; UMP biosynthesis via de novo pathway; UMP from orotate: step 2/2. Catalyzes the decarboxylation of orotidine 5'-monophosphate (OMP) to uridine 5'-monophosphate (UMP). The polypeptide is Orotidine 5'-phosphate decarboxylase (Geobacillus kaustophilus (strain HTA426)).